A 662-amino-acid chain; its full sequence is High affinity sulfate transporter 2 (662 aa).

The interval 1–35 (MSQRVSDQAMAEVIAETRTNSSSRRHGGGDDTPSL) is disordered. The next 12 membrane-spanning stretches (helical) occupy residues 103-123 (GDFIAGLTIASLCIPQDLAYA), 128-148 (LDPWYGLYSSFVAPLVYAFMG), 153-173 (IAIGPVAVVSLLLGTLLSNEI), 182-202 (LRLAFTATFFAGVTQMLLGVC), 205-225 (GFLIDFLSHAAIVGFMAGAAI), 264-284 (WETILIGLSFLIFLLITKYIA), 291-311 (FWVSAISPMICVIVSTFFVYI), 346-366 (AGVRVGVVAGLVALTEAMAIG), 383-403 (MVAMGTMNIVGSLTSCYVTTG), 420-440 (VSNIVMAIVVLLTLLVITPLF), 447-467 (VLASIIIAAVVNLVNIEAMVL), and 481-501 (GAFFGVIFKSVEIGLLIAVAI). An STAS domain is found at 532 to 655 (QYPKAEQIPG…LTVADAVATY (124 aa)).

It belongs to the SLC26A/SulP transporter (TC 2.A.53) family.

It localises to the membrane. Its function is as follows. High-affinity H(+)/sulfate cotransporter that mediates the uptake of sulfate by plant roots from low concentrations of sulfate in the soil solution. This is High affinity sulfate transporter 2 (ST2) from Stylosanthes hamata (Caribbean stylo).